The chain runs to 425 residues: uncharacterized protein (425 aa).

Helical transmembrane passes span 15 to 35, 48 to 68, 84 to 104, 107 to 127, 149 to 169, 174 to 194, 225 to 245, 271 to 291, 295 to 315, 331 to 351, 370 to 390, and 395 to 415; these read LICA…SQML, LIGA…WAPL, MLLS…FDPL, LGTV…QDIV, INAY…LAAI, TVFL…LFLA, VIQA…DSFA, ALWS…KLGI, LWLF…LAAF, VVIA…VAFM, LSAL…GAVG, and FWFC…VAPL.

The protein to E.coli AmpG and yeast YBR220c.

It is found in the cell inner membrane. This is an uncharacterized protein from Haemophilus influenzae (strain ATCC 51907 / DSM 11121 / KW20 / Rd).